A 509-amino-acid polypeptide reads, in one-letter code: Photosystem II CP47 reaction center protein (509 aa).

6 helical membrane-spanning segments follow: residues 21-36 (AVHM…WAGS), 101-115 (IVFS…IWHW), 140-156 (GIHL…FGAF), 203-218 (IAAG…FHLS), 237-253 (VLSS…AFVV), and 458-473 (SFAL…HGSR).

Belongs to the PsbB/PsbC family. PsbB subfamily. As to quaternary structure, PSII is composed of 1 copy each of membrane proteins PsbA, PsbB, PsbC, PsbD, PsbE, PsbF, PsbH, PsbI, PsbJ, PsbK, PsbL, PsbM, PsbT, PsbX, PsbY, PsbZ, Psb30/Ycf12, at least 3 peripheral proteins of the oxygen-evolving complex and a large number of cofactors. It forms dimeric complexes. It depends on Binds multiple chlorophylls. PSII binds additional chlorophylls, carotenoids and specific lipids. as a cofactor.

It localises to the plastid. The protein localises to the chloroplast thylakoid membrane. One of the components of the core complex of photosystem II (PSII). It binds chlorophyll and helps catalyze the primary light-induced photochemical processes of PSII. PSII is a light-driven water:plastoquinone oxidoreductase, using light energy to abstract electrons from H(2)O, generating O(2) and a proton gradient subsequently used for ATP formation. This Populus deltoides (Eastern poplar) protein is Photosystem II CP47 reaction center protein.